The sequence spans 266 residues: tRNA (guanine-N(1)-)-methyltransferase (266 aa).

Residues Gly-113 and Leu-137–Leu-142 each bind S-adenosyl-L-methionine.

This sequence belongs to the RNA methyltransferase TrmD family. Homodimer.

The protein resides in the cytoplasm. The catalysed reaction is guanosine(37) in tRNA + S-adenosyl-L-methionine = N(1)-methylguanosine(37) in tRNA + S-adenosyl-L-homocysteine + H(+). Functionally, specifically methylates guanosine-37 in various tRNAs. The protein is tRNA (guanine-N(1)-)-methyltransferase of Paenarthrobacter aurescens (strain TC1).